A 284-amino-acid polypeptide reads, in one-letter code: Probable palmitoyltransferase ZDHHC24 (284 aa).

Topologically, residues 1–18 are cytoplasmic; sequence MGQPWAAGSTDGAPAQLP. The helical transmembrane segment at 19–39 threads the bilayer; the sequence is LVLTALWAAAVGLELAYVLVL. At 40–52 the chain is on the extracellular side; it reads GPGPPPLGPLARA. A helical transmembrane segment spans residues 53–73; the sequence is LQLALAAFQLLNLLGNVGLFL. Topologically, residues 74-137 are cytoplasmic; sequence RSDPSIRGVM…GRCVGFGNYR (64 aa). The region spanning 94-144 is the DHHC domain; it reads AYCYQCQSQVPPRSGHCSACRVCILRRDHHCRLLGRCVGFGNYRPFLCLLL. C124 acts as the S-palmitoyl cysteine intermediate in catalysis. Residues 138–158 traverse the membrane as a helical segment; that stretch reads PFLCLLLHAAGVLLHVSVLLG. Residues 159-166 are Extracellular-facing; it reads PALSALLR. A helical transmembrane segment spans residues 167 to 187; sequence AHTPLHMAALLLLPWLMLLTG. Residues 188–201 are Cytoplasmic-facing; that stretch reads RVSLAQFALAFVTD. The chain crosses the membrane as a helical span at residues 202–222; that stretch reads TCVAGALLCGAGLLFHGMLLL. At 223–284 the chain is on the extracellular side; that stretch reads RGQTTWEWAR…TTADVGHTAS (62 aa).

It belongs to the DHHC palmitoyltransferase family.

The protein localises to the membrane. It carries out the reaction L-cysteinyl-[protein] + hexadecanoyl-CoA = S-hexadecanoyl-L-cysteinyl-[protein] + CoA. In terms of biological role, probable palmitoyltransferase that could catalyze the addition of palmitate onto various protein substrates. The sequence is that of Probable palmitoyltransferase ZDHHC24 from Homo sapiens (Human).